A 394-amino-acid polypeptide reads, in one-letter code: Elongation factor Tu (394 aa).

Positions 10–204 (KPHVNIGTIG…AVDSWIPLPE (195 aa)) constitute a tr-type G domain. The segment at 19-26 (GHVDHGKT) is G1. Residue 19–26 (GHVDHGKT) coordinates GTP. Thr26 contributes to the Mg(2+) binding site. The segment at 60–64 (GITIN) is G2. Positions 81–84 (DCPG) are G3. Residues 81–85 (DCPGH) and 136–139 (NKCD) contribute to the GTP site. The tract at residues 136 to 139 (NKCD) is G4. A G5 region spans residues 174 to 176 (SGL).

Belongs to the TRAFAC class translation factor GTPase superfamily. Classic translation factor GTPase family. EF-Tu/EF-1A subfamily. As to quaternary structure, monomer.

The protein resides in the cytoplasm. The enzyme catalyses GTP + H2O = GDP + phosphate + H(+). Functionally, GTP hydrolase that promotes the GTP-dependent binding of aminoacyl-tRNA to the A-site of ribosomes during protein biosynthesis. The polypeptide is Elongation factor Tu (Ureaplasma parvum serovar 3 (strain ATCC 27815 / 27 / NCTC 11736)).